A 367-amino-acid polypeptide reads, in one-letter code: DNA replication and repair protein RecF (367 aa).

An ATP-binding site is contributed by 30–37 (GNNAQGKT).

It belongs to the RecF family.

Its subcellular location is the cytoplasm. In terms of biological role, the RecF protein is involved in DNA metabolism; it is required for DNA replication and normal SOS inducibility. RecF binds preferentially to single-stranded, linear DNA. It also seems to bind ATP. In Clostridium tetani (strain Massachusetts / E88), this protein is DNA replication and repair protein RecF.